The following is a 147-amino-acid chain: Hemoglobin subunit beta (147 aa).

The Globin domain occupies 3-147 (EWTDSERAII…VVSALGREYH (145 aa)). Heme b-binding residues include H64 and H93.

It belongs to the globin family. In terms of assembly, heterotetramer of two alpha chains and two beta chains. As to expression, red blood cells.

Functionally, involved in oxygen transport from gills to the various peripheral tissues. The sequence is that of Hemoglobin subunit beta (hbb) from Gadus morhua (Atlantic cod).